Reading from the N-terminus, the 549-residue chain is Oxygen-dependent choline dehydrogenase (549 aa).

D4–E33 provides a ligand contact to FAD. Residue H465 is the Proton acceptor of the active site.

Belongs to the GMC oxidoreductase family. The cofactor is FAD.

It catalyses the reaction choline + A = betaine aldehyde + AH2. The enzyme catalyses betaine aldehyde + NAD(+) + H2O = glycine betaine + NADH + 2 H(+). Its pathway is amine and polyamine biosynthesis; betaine biosynthesis via choline pathway; betaine aldehyde from choline (cytochrome c reductase route): step 1/1. In terms of biological role, involved in the biosynthesis of the osmoprotectant glycine betaine. Catalyzes the oxidation of choline to betaine aldehyde and betaine aldehyde to glycine betaine at the same rate. This is Oxygen-dependent choline dehydrogenase from Brucella melitensis biotype 1 (strain ATCC 23456 / CCUG 17765 / NCTC 10094 / 16M).